A 147-amino-acid chain; its full sequence is UPF0208 membrane protein SO_2914 (147 aa).

The next 2 helical transmembrane spans lie at 40-60 (LAIL…LYTY) and 68-88 (ALTI…WLGW).

It belongs to the UPF0208 family.

It is found in the cell inner membrane. The sequence is that of UPF0208 membrane protein SO_2914 from Shewanella oneidensis (strain ATCC 700550 / JCM 31522 / CIP 106686 / LMG 19005 / NCIMB 14063 / MR-1).